The chain runs to 442 residues: Terpene cyclase aneC (442 aa).

Residues aspartate 196, asparagine 327, serine 331, and glutamate 335 each contribute to the Mg(2+) site. (2E,6E)-farnesyl diphosphate is bound by residues arginine 419 and tyrosine 420.

It belongs to the terpene synthase family. In terms of assembly, homodimer. It depends on Mg(2+) as a cofactor.

It catalyses the reaction (2E,6E)-farnesyl diphosphate = dauca-4,7-diene + diphosphate. Its pathway is secondary metabolite biosynthesis. Functionally, terpene cyclase; part of the gene cluster that mediates the biosynthesis of aculenes, a unique type of norsesquiterpenes that contain a nordaucane skeleton linked to an L-proline moiety and are of mixed biosynthetic origin. The pathway begins with the synthesis of dauca-4,7-diene by the terpene cyclase aneC using farnesyl pyrophosphate (FPP) as substrate. The cytochrome P450 monooxygenase aneF then performs the initial oxidation at C-12 of dauca-4,7-diene to yield asperaculane D. Asperaculane D is substrate of the cytochrome P450 monooxygenase aneD for C-10 hydroxylation to yield asperaculane E. The cytochrome P450 monooxygenase aneG then converts asperaculane E into aculene D via C-2 oxidation. The monomodular nonribosomal peptide synthtase aneB adenylates L-proline and the thiohydrolase aneE transfers this activated L-proline derivative to aculenes D and C to produce respectively aculenes B and A. The dioxygenase aneA converts aculene D into aculene C, and aculene B into aculene A by introducing the 5,6-alkene moiety. Asperculanes A, B, C and F, as well as 14-prolyl asperculane C, might be shunt products of the pathway. This Aspergillus aculeatus (strain ATCC 16872 / CBS 172.66 / WB 5094) protein is Terpene cyclase aneC.